Reading from the N-terminus, the 219-residue chain is Ribosome maturation factor RimP (219 aa).

2 disordered regions span residues 1-38 (MTQR…LATR) and 189-219 (VEFT…DEER). Residues 198–219 (DAFDGTDEAGDFDDDDVEDEER) show a composition bias toward acidic residues.

It belongs to the RimP family.

Its subcellular location is the cytoplasm. Required for maturation of 30S ribosomal subunits. This Salinispora arenicola (strain CNS-205) protein is Ribosome maturation factor RimP.